Reading from the N-terminus, the 435-residue chain is MEERSVLMERYVIGRQLGQGTFGKVYYARNLSSGQSVAIKMIDKEKILKVGLMEQIKREISIMRLVRHPNVLQLFEVMATKSNIYFALEYAKGGELFHKMARAKLNEESARNYFQQLISAMDYCHSRGVYHRDLKPENLLLDENETLKVSDFGLSALAESRRQDGLLHTACGTPAYVAPEVLSRKGYSGSKADVWSCGVILFVLVANYLPFHDRNIIQMYRKIAKAEYRCPRHFSAELKELLYGILDPDPSTRMSISRIKRSAWYRKPIAISALNNETGKKSCTSEAPFSGPTICISSERNQEPPNLHNLNAFDIISLSTGFDLSGLFGERYGRRESLFTSRKPAAAVLVKLKELAKALNLKVTKTDNGVLKLATTKEGRKGRLELDAEVSEVAPFLLVELKKTNGDTLEYQRMMKEDIRPSLKDIIWTWQGDQQ.

The Protein kinase domain maps to 11–265 (YVIGRQLGQG…ISRIKRSAWY (255 aa)). Residues 17–25 (LGQGTFGKV) and lysine 40 each bind ATP. Aspartate 133 acts as the Proton acceptor in catalysis. The segment at 151–180 (DFGLSALAESRRQDGLLHTACGTPAYVAPE) is activation loop. An NAF domain is found at 283 to 329 (CTSEAPFSGPTICISSERNQEPPNLHNLNAFDIISLSTGFDLSGLFG). Residues 334–363 (RRESLFTSRKPAAAVLVKLKELAKALNLKV) are PPI.

Belongs to the protein kinase superfamily. CAMK Ser/Thr protein kinase family. SNF1 subfamily. Mn(2+) serves as cofactor.

It catalyses the reaction L-seryl-[protein] + ATP = O-phospho-L-seryl-[protein] + ADP + H(+). The enzyme catalyses L-threonyl-[protein] + ATP = O-phospho-L-threonyl-[protein] + ADP + H(+). In terms of biological role, CIPK serine-threonine protein kinases interact with CBL proteins. Binding of a CBL protein to the regulatory NAF domain of CIPK protein lead to the activation of the kinase in a calcium-dependent manner. This Oryza sativa subsp. japonica (Rice) protein is CBL-interacting protein kinase 28 (CIPK28).